The following is a 179-amino-acid chain: Bifunctional protein PyrR (179 aa).

The short motif at 97–109 (IILTDDVLYTGRT) is the PRPP-binding element.

It belongs to the purine/pyrimidine phosphoribosyltransferase family. PyrR subfamily.

The enzyme catalyses UMP + diphosphate = 5-phospho-alpha-D-ribose 1-diphosphate + uracil. Functionally, regulates the transcription of the pyrimidine nucleotide (pyr) operon in response to exogenous pyrimidines. Its function is as follows. Also displays a weak uracil phosphoribosyltransferase activity which is not physiologically significant. This chain is Bifunctional protein PyrR, found in Elusimicrobium minutum (strain Pei191).